Consider the following 612-residue polypeptide: UvrABC system protein C (612 aa).

Residues 20–98 form the GIY-YIG domain; that stretch reads THSGVYRMLD…IKQHRPKYNI (79 aa). Positions 208–243 constitute a UVR domain; that stretch reads SSVLEEISAKMYQASEDMEYEKAQVYRDQLVVLRKL.

Belongs to the UvrC family. In terms of assembly, interacts with UvrB in an incision complex.

The protein resides in the cytoplasm. The UvrABC repair system catalyzes the recognition and processing of DNA lesions. UvrC both incises the 5' and 3' sides of the lesion. The N-terminal half is responsible for the 3' incision and the C-terminal half is responsible for the 5' incision. This Francisella tularensis subsp. mediasiatica (strain FSC147) protein is UvrABC system protein C.